We begin with the raw amino-acid sequence, 1258 residues long: Non-secreted LysM effector LysM19 (1258 aa).

The tract at residues 148-168 (VTQSLPNISSHEKRDDHEGNS) is disordered. Residues 157 to 168 (SHEKRDDHEGNS) are compositionally biased toward basic and acidic residues. LysM domains lie at 1028-1073 (IVYT…SICL) and 1179-1227 (RWHV…AYCT).

Belongs to the secreted LysM effector family.

Its function is as follows. Non-secreted LysM effector that might be involved in manipulation of host defenses for successful infection. The protein is Non-secreted LysM effector LysM19 of Penicillium expansum (Blue mold rot fungus).